The primary structure comprises 785 residues: Conserved oligomeric Golgi complex subunit 4 (785 aa).

The interval 1–24 is disordered; sequence MADLDSPPKLSGVQQPSEGVGGGR. Ala2 is subject to N-acetylalanine. The tract at residues 2 to 84 is interaction with SCFD1; the sequence is ADLDSPPKLS…VTLHRMGPNL (83 aa). At Ser6 the chain carries Phosphoserine. Positions 85–153 are interaction with STX5; sequence QLIEGDAKQL…TALRSEDYEQ (69 aa). Residues 618-740 are d domain; the sequence is PQVQPWINSF…SQMATILNLE (123 aa). Positions 741–785 are e domain; essential for proper cell surface glycosylation; it reads RVTEILDYWGPNSGPLTWRLTPAEVRQVLALRIDFRSEDIKRLRL.

Belongs to the COG4 family. In terms of assembly, monomer. Component of the conserved oligomeric Golgi (COG) complex which is composed of eight different subunits and is required for normal Golgi morphology and localization. Mediates interaction of SCFD1 with the COG complex. Interacts with STX5.

The protein localises to the cytoplasm. It localises to the cytosol. Its subcellular location is the golgi apparatus membrane. Required for normal Golgi function. Plays a role in SNARE-pin assembly and Golgi-to-ER retrograde transport via its interaction with SCFD1. The sequence is that of Conserved oligomeric Golgi complex subunit 4 (COG4) from Homo sapiens (Human).